The primary structure comprises 889 residues: Alanine--tRNA ligase (889 aa).

Residues histidine 569, histidine 573, cysteine 671, and histidine 675 each coordinate Zn(2+).

Belongs to the class-II aminoacyl-tRNA synthetase family. The cofactor is Zn(2+).

The protein localises to the cytoplasm. The catalysed reaction is tRNA(Ala) + L-alanine + ATP = L-alanyl-tRNA(Ala) + AMP + diphosphate. Catalyzes the attachment of alanine to tRNA(Ala) in a two-step reaction: alanine is first activated by ATP to form Ala-AMP and then transferred to the acceptor end of tRNA(Ala). Also edits incorrectly charged Ser-tRNA(Ala) and Gly-tRNA(Ala) via its editing domain. In Synechococcus sp. (strain CC9605), this protein is Alanine--tRNA ligase.